The primary structure comprises 627 residues: Interferon-induced GTP-binding protein MxB (627 aa).

In terms of domain architecture, Dynamin-type G spans 34 to 307 (DLALPAIAVI…LVHHIQRSLP (274 aa)). A G1 motif region spans residues 44 to 51 (GDQSSGKS). GTP is bound at residue 44-51 (GDQSSGKS). The tract at residues 69–71 (VTR) is G2 motif. Residues 145-148 (DLPG) form a G3 motif region. Residues 145 to 149 (DLPGI) and 214 to 217 (TKPD) each bind GTP. The G4 motif stretch occupies residues 214-217 (TKPD). Residues 246–249 (RCRG) form a G5 motif region. The GED domain occupies 541-627 (LSEMKLHLES…MKAQNLLATY (87 aa)).

Belongs to the TRAFAC class dynamin-like GTPase superfamily. Dynamin/Fzo/YdjA family.

The protein localises to the cytoplasm. The polypeptide is Interferon-induced GTP-binding protein MxB (mxb) (Danio rerio (Zebrafish)).